Here is a 186-residue protein sequence, read N- to C-terminus: Ribosome-recycling factor (186 aa).

Belongs to the RRF family.

It is found in the cytoplasm. Its function is as follows. Responsible for the release of ribosomes from messenger RNA at the termination of protein biosynthesis. May increase the efficiency of translation by recycling ribosomes from one round of translation to another. In Chlorobium phaeobacteroides (strain DSM 266 / SMG 266 / 2430), this protein is Ribosome-recycling factor.